Consider the following 280-residue polypeptide: MDFILLIFLSGVFLPNIFSLQPTVEQDPGVTISDDQYYDEEENNTDENSAIFQKLEDNGGDTPANEKTGNYYKDIKQYVFTTPDSKGTKTEVSVTATTDLKFTMKDYKSSKATASGEEDKRSEPSRKSSTPNVPAFWTMLAKAINETAVSMDDKDLFYQAIPASDLNSTNEDQLSELEEIKLKLMLGISLMTLILLIPLLIFCFATLYKLRHLRDKTCESQYSVNPELATLSYFHPSEGSNQTVLTEESSFLPPEESGKVVIIESNTVNEAEVTEERISE.

Positions 1-19 (MDFILLIFLSGVFLPNIFS) are cleaved as a signal peptide. The Vesicular portion of the chain corresponds to 20–183 (LQPTVEQDPG…LSELEEIKLK (164 aa)). The interval 112–131 (ATASGEEDKRSEPSRKSSTP) is disordered. The segment covering 117–126 (EEDKRSEPSR) has biased composition (basic and acidic residues). N-linked (GlcNAc...) asparagine glycosylation is present at asparagine 145. A helical membrane pass occupies residues 184 to 204 (LMLGISLMTLILLIPLLIFCF). Residues 205–280 (ATLYKLRHLR…AEVTEERISE (76 aa)) lie on the Cytoplasmic side of the membrane. A Phosphoserine modification is found at serine 279.

As to quaternary structure, interacts with SNAP25. Post-translationally, highly N- and O-glycosylated; contains sialic acid. As to expression, highly expressed in testis and epididymis. Low expression in other tissues.

The protein localises to the cytoplasmic vesicle. It is found in the secretory vesicle. It localises to the acrosome membrane. The protein resides in the acrosome inner membrane. Its subcellular location is the acrosome outer membrane. Its function is as follows. Acrosomal membrane-anchored protein involved in the process of fertilization and in acrosome biogenesis. The chain is Equatorin (Eqtn) from Rattus norvegicus (Rat).